Reading from the N-terminus, the 424-residue chain is C4-dicarboxylate transport protein (424 aa).

Helical transmembrane passes span 4 to 24, 44 to 64, 76 to 96, 142 to 162, 184 to 206, 222 to 242, 326 to 346, and 352 to 372; these read SLFK…VLLG, LIKM…IAGM, VALI…LVVV, IGAF…LFGF, VFFG…AMAF, LIVC…GLIA, IWHQ…AAGV, and IVLA…LALI.

The protein belongs to the dicarboxylate/amino acid:cation symporter (DAACS) (TC 2.A.23) family.

It is found in the cell inner membrane. In terms of biological role, responsible for the transport of dicarboxylates such as succinate, fumarate, and malate from the periplasm across the membrane. This Erwinia tasmaniensis (strain DSM 17950 / CFBP 7177 / CIP 109463 / NCPPB 4357 / Et1/99) protein is C4-dicarboxylate transport protein.